Reading from the N-terminus, the 207-residue chain is Dephospho-CoA kinase (207 aa).

A DPCK domain is found at 5 to 203 (AVGLTGGIAC…ARYRALASVF (199 aa)). 13–18 (ACGKSL) contacts ATP.

It belongs to the CoaE family.

The protein resides in the cytoplasm. It catalyses the reaction 3'-dephospho-CoA + ATP = ADP + CoA + H(+). It participates in cofactor biosynthesis; coenzyme A biosynthesis; CoA from (R)-pantothenate: step 5/5. In terms of biological role, catalyzes the phosphorylation of the 3'-hydroxyl group of dephosphocoenzyme A to form coenzyme A. This is Dephospho-CoA kinase from Xylella fastidiosa (strain 9a5c).